Reading from the N-terminus, the 125-residue chain is Ribonuclease P protein component (125 aa).

Belongs to the RnpA family. Consists of a catalytic RNA component (M1 or rnpB) and a protein subunit.

The enzyme catalyses Endonucleolytic cleavage of RNA, removing 5'-extranucleotides from tRNA precursor.. Its function is as follows. RNaseP catalyzes the removal of the 5'-leader sequence from pre-tRNA to produce the mature 5'-terminus. It can also cleave other RNA substrates such as 4.5S RNA. The protein component plays an auxiliary but essential role in vivo by binding to the 5'-leader sequence and broadening the substrate specificity of the ribozyme. This Clostridium perfringens (strain ATCC 13124 / DSM 756 / JCM 1290 / NCIMB 6125 / NCTC 8237 / Type A) protein is Ribonuclease P protein component.